A 307-amino-acid chain; its full sequence is MEGVVLLHKPKGMTSHDCVFKLRKILREKRIGHTGTLDPDVTGVLPICVGRATKIAQFLTSETKTYEGEVTLGFSTTTEDASGEVVETKHVDRVITRKEVEEALVTLTGTIEQMPPMFSAVKVNGKKLYEYARAGQEVERPVRTITIHEFVLLDDREVFEGETISFRFRVTCSKGTYVRTLAVMIGEKLGFPSHMSHLVRTASGEFLLEDCISFEEIEENVQNGTVESIFISIDEALSKFPKMVVDEKQAEKIKNGMFLKNELQITAPFITVFDKNDRCLAIYEHHPKHPGMLKPMKVLVNNQELKL.

The Nucleophile role is filled by Asp-38.

The protein belongs to the pseudouridine synthase TruB family. Type 1 subfamily.

It carries out the reaction uridine(55) in tRNA = pseudouridine(55) in tRNA. In terms of biological role, responsible for synthesis of pseudouridine from uracil-55 in the psi GC loop of transfer RNAs. This chain is tRNA pseudouridine synthase B, found in Bacillus cereus (strain ZK / E33L).